Here is a 116-residue protein sequence, read N- to C-terminus: Large ribosomal subunit protein bL19c (116 aa).

The protein belongs to the bacterial ribosomal protein bL19 family.

The protein resides in the plastid. The protein localises to the chloroplast. This Cyanidium caldarium (Red alga) protein is Large ribosomal subunit protein bL19c.